Consider the following 207-residue polypeptide: Outer-membrane lipoprotein carrier protein (207 aa).

An N-terminal signal peptide occupies residues 1-21 (MRAIRMLLVSALAMGAVSAHA).

It belongs to the LolA family. As to quaternary structure, monomer.

The protein resides in the periplasm. Participates in the translocation of lipoproteins from the inner membrane to the outer membrane. Only forms a complex with a lipoprotein if the residue after the N-terminal Cys is not an aspartate (The Asp acts as a targeting signal to indicate that the lipoprotein should stay in the inner membrane). The chain is Outer-membrane lipoprotein carrier protein from Pseudomonas entomophila (strain L48).